Reading from the N-terminus, the 500-residue chain is MSHFPWLTIIVVLPISAGSSIGFLPYRGNKAVRWYTICICILELLLTTYAFCYHFQLDDPLIQLEEDYNWINLFDFNWRLGIDGLSMGPVLLTGFITTLATLAAWPVTRDSRLFHFLMLAMYSGQIGSFSSRDLLLFFMMWELELIPIYLLLSLWGGKKRLYSATKFILYTAGGSIFLLMGVSGMGLYSSNEPTLNFETLTNQSYPVALEIIFYIGFFIAYAAKSPIIPLHTWLPDTHGEAHYSTCMLLAGILLKMGAYGLVRINMELLPHAHSIFSPWLMIIGAIQIIYAASTSPGQRNLKKRIAYSSVSHMGFITIGIGSITDTGLNGSILQIISHGFIGAALFFLAGTTYDRIRLVYLDEMGGIAILMPKMFMMFSSFSMASLALPGMSGFVAESVVFLGIITSPKYFLMPKILITFVMAIGMILTPIYSLSMSRQIFYGYKLFNVSNSYFVDSGPRELFILICILLPVIGIGIYPDFVLSLSVDKVEAILSSYFHR.

The next 14 membrane-spanning stretches (helical) occupy residues 4–24 (FPWL…IGFL), 37–57 (ICIC…HFQL), 87–107 (MGPV…AWPV), 113–130 (LFHF…GSFS), 134–154 (LLLF…LLSL), 167–187 (FILY…GMGL), 208–228 (ALEI…SPII), 242–262 (HYST…YGLV), 272–292 (AHSI…IYAA), 305–325 (IAYS…SITD), 330–350 (GSIL…FLAG), 386–406 (LALP…GIIT), 416–436 (ILIT…SLSM), and 462–482 (LFIL…PDFV).

It belongs to the complex I subunit 4 family.

It is found in the plastid. The protein resides in the chloroplast thylakoid membrane. It carries out the reaction a plastoquinone + NADH + (n+1) H(+)(in) = a plastoquinol + NAD(+) + n H(+)(out). It catalyses the reaction a plastoquinone + NADPH + (n+1) H(+)(in) = a plastoquinol + NADP(+) + n H(+)(out). The protein is NAD(P)H-quinone oxidoreductase chain 4, chloroplastic of Illicium oligandrum (Star anise).